We begin with the raw amino-acid sequence, 414 residues long: Lysosome-associated membrane glycoprotein 1 (414 aa).

Positions 1 to 18 (MGGAARAVLLGFLQASSS) are cleaved as a signal peptide. The segment at 19 to 181 (FDVRDSTGKV…SANKTECRED (163 aa)) is first lumenal domain. Over 19–379 (FDVRDSTGKV…EECQLDENNM (361 aa)) the chain is Lumenal. Residues cysteine 29 and cysteine 67 are joined by a disulfide bond. 10 N-linked (GlcNAc...) asparagine glycosylation sites follow: asparagine 33, asparagine 58, asparagine 71, asparagine 90, asparagine 108, asparagine 117, asparagine 154, asparagine 159, asparagine 168, and asparagine 174. Cysteine 142 and cysteine 178 form a disulfide bridge. The segment at 182 to 224 (MVSTTTVAPTTPKHATSQVPTTSPAPTAAPSSPAVGKYNVTGA) is hinge. The segment at 186–213 (TTVAPTTPKHATSQVPTTSPAPTAAPSS) is disordered. The span at 196-213 (ATSQVPTTSPAPTAAPSS) shows a compositional bias: low complexity. Residues asparagine 220, asparagine 225, asparagine 238, asparagine 259, asparagine 289, asparagine 301, and asparagine 319 are each glycosylated (N-linked (GlcNAc...) asparagine). The second lumenal domain stretch occupies residues 225 to 379 (NGTCVLASMG…EECQLDENNM (155 aa)). Cysteine 228 and cysteine 266 are joined by a disulfide. The cysteines at positions 335 and 372 are disulfide-linked. A helical membrane pass occupies residues 380 to 403 (LIPIIVGAALAGLVLIVLIAYLIG). Over 404–414 (RKRSHAGYQTI) the chain is Cytoplasmic.

It belongs to the LAMP family.

It is found in the lysosome membrane. Its subcellular location is the endosome membrane. The protein localises to the late endosome membrane. It localises to the cell membrane. The protein resides in the cytolytic granule membrane. Its function is as follows. Lysosomal membrane glycoprotein which plays an important role in lysosome biogenesis, lysosomal pH regulation, autophagy and cholesterol homeostasis. In terms of biological role, (Microbial infection) Plays an essential role in efficient replication and spread of Marek's disease virus, by facilitating viral cell-to-cell spread. The chain is Lysosome-associated membrane glycoprotein 1 (LAMP1) from Gallus gallus (Chicken).